A 475-amino-acid polypeptide reads, in one-letter code: Aspartyl/glutamyl-tRNA(Asn/Gln) amidotransferase subunit B (475 aa).

Belongs to the GatB/GatE family. GatB subfamily. As to quaternary structure, heterotrimer of A, B and C subunits.

It carries out the reaction L-glutamyl-tRNA(Gln) + L-glutamine + ATP + H2O = L-glutaminyl-tRNA(Gln) + L-glutamate + ADP + phosphate + H(+). It catalyses the reaction L-aspartyl-tRNA(Asn) + L-glutamine + ATP + H2O = L-asparaginyl-tRNA(Asn) + L-glutamate + ADP + phosphate + 2 H(+). Its function is as follows. Allows the formation of correctly charged Asn-tRNA(Asn) or Gln-tRNA(Gln) through the transamidation of misacylated Asp-tRNA(Asn) or Glu-tRNA(Gln) in organisms which lack either or both of asparaginyl-tRNA or glutaminyl-tRNA synthetases. The reaction takes place in the presence of glutamine and ATP through an activated phospho-Asp-tRNA(Asn) or phospho-Glu-tRNA(Gln). This Mycoplasma mobile (strain ATCC 43663 / 163K / NCTC 11711) (Mesomycoplasma mobile) protein is Aspartyl/glutamyl-tRNA(Asn/Gln) amidotransferase subunit B.